A 517-amino-acid chain; its full sequence is ATP synthase subunit beta (517 aa).

Composition is skewed to low complexity over residues 1–22 (MAKAATPKTTAAAEAKPAAAKA) and 29–42 (AKTAAAKSDAAPKA). Residues 1-42 (MAKAATPKTTAAAEAKPAAAKAPAKKAPAKTAAAKSDAAPKA) are disordered. 195–202 (GGAGVGKT) serves as a coordination point for ATP.

The protein belongs to the ATPase alpha/beta chains family. As to quaternary structure, F-type ATPases have 2 components, CF(1) - the catalytic core - and CF(0) - the membrane proton channel. CF(1) has five subunits: alpha(3), beta(3), gamma(1), delta(1), epsilon(1). CF(0) has three main subunits: a(1), b(2) and c(9-12). The alpha and beta chains form an alternating ring which encloses part of the gamma chain. CF(1) is attached to CF(0) by a central stalk formed by the gamma and epsilon chains, while a peripheral stalk is formed by the delta and b chains.

It localises to the cell inner membrane. It carries out the reaction ATP + H2O + 4 H(+)(in) = ADP + phosphate + 5 H(+)(out). In terms of biological role, produces ATP from ADP in the presence of a proton gradient across the membrane. The catalytic sites are hosted primarily by the beta subunits. This is ATP synthase subunit beta from Brucella anthropi (strain ATCC 49188 / DSM 6882 / CCUG 24695 / JCM 21032 / LMG 3331 / NBRC 15819 / NCTC 12168 / Alc 37) (Ochrobactrum anthropi).